The following is a 343-amino-acid chain: Ion-translocating oxidoreductase complex subunit D (343 aa).

The next 4 membrane-spanning stretches (helical) occupy residues valine 24–leucine 44, tyrosine 45–arginine 65, leucine 69–proline 91, and alanine 124–alanine 144. Threonine 171 carries the FMN phosphoryl threonine modification. The next 5 helical transmembrane spans lie at phenylalanine 197 to leucine 217, leucine 221 to phenylalanine 241, glycine 251 to threonine 271, leucine 284 to proline 304, and aspartate 305 to threonine 325.

The protein belongs to the NqrB/RnfD family. As to quaternary structure, the complex is composed of six subunits: RnfA, RnfB, RnfC, RnfD, RnfE and RnfG. Requires FMN as cofactor.

Its subcellular location is the cell inner membrane. In terms of biological role, part of a membrane-bound complex that couples electron transfer with translocation of ions across the membrane. This chain is Ion-translocating oxidoreductase complex subunit D, found in Ectopseudomonas mendocina (strain ymp) (Pseudomonas mendocina).